Reading from the N-terminus, the 581-residue chain is Proline--tRNA ligase (581 aa).

It belongs to the class-II aminoacyl-tRNA synthetase family. ProS type 1 subfamily. Homodimer.

Its subcellular location is the cytoplasm. It catalyses the reaction tRNA(Pro) + L-proline + ATP = L-prolyl-tRNA(Pro) + AMP + diphosphate. Catalyzes the attachment of proline to tRNA(Pro) in a two-step reaction: proline is first activated by ATP to form Pro-AMP and then transferred to the acceptor end of tRNA(Pro). As ProRS can inadvertently accommodate and process non-cognate amino acids such as alanine and cysteine, to avoid such errors it has two additional distinct editing activities against alanine. One activity is designated as 'pretransfer' editing and involves the tRNA(Pro)-independent hydrolysis of activated Ala-AMP. The other activity is designated 'posttransfer' editing and involves deacylation of mischarged Ala-tRNA(Pro). The misacylated Cys-tRNA(Pro) is not edited by ProRS. The polypeptide is Proline--tRNA ligase (Blochmanniella pennsylvanica (strain BPEN)).